A 48-amino-acid chain; its full sequence is Delta-actitoxin-Bgr2b (48 aa).

Intrachain disulfides connect Cys-4–Cys-45, Cys-6–Cys-35, and Cys-28–Cys-46.

The protein belongs to the sea anemone sodium channel inhibitory toxin family. Type I subfamily.

The protein resides in the secreted. The protein localises to the nematocyst. Its function is as follows. Binds voltage-dependently at site 3 of sodium channels (Nav) and inhibits the inactivation of the activated channels, thereby blocking neuronal transmission. Has effect on SCN4A/SCN1B, and SCN5A/SCN1B, has no effect on SCN2A/SCN1B, and SCN10A/SCN1B. Possesses the highest efficacy for the insect sodium channel para/tipE. Also interacts with sodium channels in cardiac cells. Shows lethality to crabs. The chain is Delta-actitoxin-Bgr2b from Bunodosoma granuliferum (Red warty sea anemone).